A 510-amino-acid chain; its full sequence is NAD(P)H-quinone oxidoreductase subunit 2, chloroplastic (510 aa).

The next 12 membrane-spanning stretches (helical) occupy residues 24 to 44 (LLLF…GLIL), 59 to 79 (WFYF…LFRW), 99 to 119 (IFQF…VEYI), 124 to 144 (MAIT…MFLC), 149 to 169 (LITI…LSGY), 184 to 204 (LLMG…LYGL), 229 to 249 (ISIA…PAPF), 295 to 315 (WHLL…LIAI), 323 to 343 (MLAY…IVGD), 347 to 367 (GYAS…GTFA), 395 to 415 (ALSL…AGFF), and 418 to 438 (LHLF…IGLL).

This sequence belongs to the complex I subunit 2 family. As to quaternary structure, NDH is composed of at least 16 different subunits, 5 of which are encoded in the nucleus.

It localises to the plastid. The protein resides in the chloroplast thylakoid membrane. It carries out the reaction a plastoquinone + NADH + (n+1) H(+)(in) = a plastoquinol + NAD(+) + n H(+)(out). The catalysed reaction is a plastoquinone + NADPH + (n+1) H(+)(in) = a plastoquinol + NADP(+) + n H(+)(out). In terms of biological role, NDH shuttles electrons from NAD(P)H:plastoquinone, via FMN and iron-sulfur (Fe-S) centers, to quinones in the photosynthetic chain and possibly in a chloroplast respiratory chain. The immediate electron acceptor for the enzyme in this species is believed to be plastoquinone. Couples the redox reaction to proton translocation, and thus conserves the redox energy in a proton gradient. The chain is NAD(P)H-quinone oxidoreductase subunit 2, chloroplastic from Muilla maritima (Sea muilla).